Consider the following 353-residue polypeptide: Probable peptide ABC transporter ATP-binding protein y4tS (353 aa).

One can recognise an ABC transporter domain in the interval 6 to 256 (LKVESLTKHY…PVHPYTEALI (251 aa)). 49–56 (GESGCGKS) contributes to the ATP binding site.

This sequence belongs to the ABC transporter superfamily.

It is found in the cell inner membrane. Functionally, probably part of a binding-protein-dependent transport system y4tOPQRS for a peptide. Probably responsible for energy coupling to the transport system. The protein is Probable peptide ABC transporter ATP-binding protein y4tS of Sinorhizobium fredii (strain NBRC 101917 / NGR234).